The following is a 61-amino-acid chain: Adipokinetic prohormone type 2 (61 aa).

An N-terminal signal peptide occupies residues 1–22 (MRQGCALTLMLLVVVCAALSAA). Position 23 is a pyrrolidone carboxylic acid (Gln-23). At Trp-30 the chain carries Tryptophan amide.

This sequence belongs to the AKH/HRTH/RPCH family. In terms of assembly, adipokinetic hormone precursor-related peptide (APRP) can form three type of disulfide-bond dimers: p1 (alpha-alpha), p2 (alpha-beta), and p3 (beta-beta).

It is found in the secreted. Functionally, this hormone, released from cells in the corpora cardiaca, causes release of diglycerides from the fat body and stimulation of muscles to use these diglycerides as an energy source during energy-demanding processes. In Schistocerca nitens (Vagrant locust), this protein is Adipokinetic prohormone type 2.